The chain runs to 227 residues: MVKSSLQRILNSHCFAREKEGDKRSATLHASRTMPLLSQHSRGGCSSESSRVALNCCSNLGPGPRWCSDVPHPPLKIPGGRGNSQRDHSLSASILYSDERLNVTEEPTSNDKTRVLSIQSTLTEAKQVTWRAVWSGGGLYIELPAGPLPEGSKDSFAALLEFAEEQLQADHVFICFPKNREDRAALLRTFSFLGFEIVRPGHPLVPKRPDACFMVYTLEREDPGEED.

It belongs to the ODC antizyme family. In terms of assembly, interacts with ODC1 and thereby sterically blocks ODC homodimerization. Forms a ternary complex with PSMB4 and OAZ1 before PSMB4 is incorporated into the 20S proteasome. Interacts with AZIN2; this interaction disrupts the interaction between the antizyme and ODC1. Interacts with FAM171A1.

Functionally, ornithine decarboxylase (ODC) antizyme protein that negatively regulates ODC activity and intracellular polyamine biosynthesis and uptake in response to increased intracellular polyamine levels. Binds to ODC monomers, inhibiting the assembly of the functional ODC homodimer, and targets the monomers for ubiquitin-independent proteolytic destruction by the 26S proteasome. Triggers ODC degradation by inducing the exposure of a cryptic proteasome-interacting surface of ODC. Stabilizes AZIN2 by interfering with its ubiquitination. Also inhibits cellular uptake of polyamines by inactivating the polyamine uptake transporter. SMAD1/OAZ1/PSMB4 complex mediates the degradation of the CREBBP/EP300 repressor SNIP1. Involved in the translocation of AZIN2 from ER-Golgi intermediate compartment (ERGIC) to the cytosol. The sequence is that of Ornithine decarboxylase antizyme 1 (Oaz1) from Mus musculus (Mouse).